Consider the following 20-residue polypeptide: Cytochrome c oxidase subunit 6A1, mitochondrial (20 aa).

It belongs to the cytochrome c oxidase subunit 6A family. As to quaternary structure, component of the cytochrome c oxidase (complex IV, CIV), a multisubunit enzyme composed of 14 subunits. The complex is composed of a catalytic core of 3 subunits MT-CO1, MT-CO2 and MT-CO3, encoded in the mitochondrial DNA, and 11 supernumerary subunits COX4I, COX5A, COX5B, COX6A, COX6B, COX6C, COX7A, COX7B, COX7C, COX8 and NDUFA4, which are encoded in the nuclear genome. The complex exists as a monomer or a dimer and forms supercomplexes (SCs) in the inner mitochondrial membrane with NADH-ubiquinone oxidoreductase (complex I, CI) and ubiquinol-cytochrome c oxidoreductase (cytochrome b-c1 complex, complex III, CIII), resulting in different assemblies (supercomplex SCI(1)III(2)IV(1) and megacomplex MCI(2)III(2)IV(2)). Liver specific isoform.

It is found in the mitochondrion inner membrane. Its pathway is energy metabolism; oxidative phosphorylation. Its function is as follows. Component of the cytochrome c oxidase, the last enzyme in the mitochondrial electron transport chain which drives oxidative phosphorylation. The respiratory chain contains 3 multisubunit complexes succinate dehydrogenase (complex II, CII), ubiquinol-cytochrome c oxidoreductase (cytochrome b-c1 complex, complex III, CIII) and cytochrome c oxidase (complex IV, CIV), that cooperate to transfer electrons derived from NADH and succinate to molecular oxygen, creating an electrochemical gradient over the inner membrane that drives transmembrane transport and the ATP synthase. Cytochrome c oxidase is the component of the respiratory chain that catalyzes the reduction of oxygen to water. Electrons originating from reduced cytochrome c in the intermembrane space (IMS) are transferred via the dinuclear copper A center (CU(A)) of subunit 2 and heme A of subunit 1 to the active site in subunit 1, a binuclear center (BNC) formed by heme A3 and copper B (CU(B)). The BNC reduces molecular oxygen to 2 water molecules unsing 4 electrons from cytochrome c in the IMS and 4 protons from the mitochondrial matrix. The sequence is that of Cytochrome c oxidase subunit 6A1, mitochondrial (COX6A1) from Ovis aries (Sheep).